The chain runs to 974 residues: UvrABC system protein A (974 aa).

34-41 (GLSGSGKS) contributes to the ATP binding site. ABC transporter domains are found at residues 331-610 (WARS…TNSL) and 630-959 (ISKT…QFLK). 663 to 670 (GVSGGGKS) lines the ATP pocket. The C4-type zinc-finger motif lies at 762–788 (CEACQGDGVIKIEMHFLPDVYVTCDVC).

Belongs to the ABC transporter superfamily. UvrA family. As to quaternary structure, forms a heterotetramer with UvrB during the search for lesions.

It localises to the cytoplasm. The UvrABC repair system catalyzes the recognition and processing of DNA lesions. UvrA is an ATPase and a DNA-binding protein. A damage recognition complex composed of 2 UvrA and 2 UvrB subunits scans DNA for abnormalities. When the presence of a lesion has been verified by UvrB, the UvrA molecules dissociate. The sequence is that of UvrABC system protein A from Brucella melitensis biotype 1 (strain ATCC 23456 / CCUG 17765 / NCTC 10094 / 16M).